A 189-amino-acid chain; its full sequence is Lutzicidin (189 aa).

The signal sequence occupies residues 1-22 (MQGFFWKTLLVVALCGTSSSLA). Positions 23–155 (HRPLSYGEAL…DEEKDRPKRV (133 aa)) are excised as a propeptide. 2 disulfides stabilise this stretch: Cys-79-Cys-90 and Cys-101-Cys-118. Acidic residues predominate over residues 125–148 (EEEEEDEEEQKAEVEKDEEKEDEE). The disordered stretch occupies residues 125–152 (EEEEEDEEEQKAEVEKDEEKEDEEKDRP).

It belongs to the cathelicidin family. As to expression, expressed by the venom gland.

It is found in the secreted. The protein localises to the target cell membrane. In terms of biological role, potent antimicrobial peptide against Gram-negative and Gram-positive bacteria. Adopts an amphipathic alpha helical conformation, that may allow to partition into the target membrane. Low hemolytic activities have been observed on mammalian cells. The chain is Lutzicidin from Bothrops lutzi (Sertao lancehead).